A 607-amino-acid polypeptide reads, in one-letter code: Protease Do-like 2, chloroplastic (607 aa).

Residues 41 to 104 (SSNIKRKSSR…LSDFSRDQQT (64 aa)) are disordered. Basic and acidic residues predominate over residues 87-104 (PKKEKKESLSDFSRDQQT). The serine protease stretch occupies residues 118-317 (VVKVYCTHTA…LTDYERNGKY (200 aa)). Catalysis depends on charge relay system residues His-159, Asp-190, and Ser-268. Positions 308–403 (LTDYERNGKY…YLISQKFAGD (96 aa)) constitute a PDZ domain.

This sequence belongs to the peptidase S1C family.

It localises to the plastid. The protein resides in the chloroplast thylakoid membrane. Serine protease that performs the primary cleavage of the photodamaged D1 protein in plant photosystem II. This Arabidopsis thaliana (Mouse-ear cress) protein is Protease Do-like 2, chloroplastic (DEGP2).